The following is a 283-amino-acid chain: Phosphatidylserine decarboxylase proenzyme (283 aa).

Catalysis depends on charge relay system; for autoendoproteolytic cleavage activity residues D96, H152, and S250. S250 functions as the Schiff-base intermediate with substrate; via pyruvic acid; for decarboxylase activity in the catalytic mechanism. The residue at position 250 (S250) is a Pyruvic acid (Ser); by autocatalysis.

The protein belongs to the phosphatidylserine decarboxylase family. PSD-B subfamily. Prokaryotic type I sub-subfamily. In terms of assembly, heterodimer of a large membrane-associated beta subunit and a small pyruvoyl-containing alpha subunit. Pyruvate is required as a cofactor. In terms of processing, is synthesized initially as an inactive proenzyme. Formation of the active enzyme involves a self-maturation process in which the active site pyruvoyl group is generated from an internal serine residue via an autocatalytic post-translational modification. Two non-identical subunits are generated from the proenzyme in this reaction, and the pyruvate is formed at the N-terminus of the alpha chain, which is derived from the carboxyl end of the proenzyme. The autoendoproteolytic cleavage occurs by a canonical serine protease mechanism, in which the side chain hydroxyl group of the serine supplies its oxygen atom to form the C-terminus of the beta chain, while the remainder of the serine residue undergoes an oxidative deamination to produce ammonia and the pyruvoyl prosthetic group on the alpha chain. During this reaction, the Ser that is part of the protease active site of the proenzyme becomes the pyruvoyl prosthetic group, which constitutes an essential element of the active site of the mature decarboxylase.

Its subcellular location is the cell membrane. It catalyses the reaction a 1,2-diacyl-sn-glycero-3-phospho-L-serine + H(+) = a 1,2-diacyl-sn-glycero-3-phosphoethanolamine + CO2. It participates in phospholipid metabolism; phosphatidylethanolamine biosynthesis; phosphatidylethanolamine from CDP-diacylglycerol: step 2/2. Catalyzes the formation of phosphatidylethanolamine (PtdEtn) from phosphatidylserine (PtdSer). The polypeptide is Phosphatidylserine decarboxylase proenzyme (Acinetobacter baumannii (strain AB0057)).